We begin with the raw amino-acid sequence, 310 residues long: Transcription factor LRL2 (310 aa).

2 stretches are compositionally biased toward low complexity: residues 1 to 20 (MNSSSLLTPSSSPSPHLQSP) and 104 to 126 (QTQTQSQATASATTGGATAQPQT). Disordered regions lie at residues 1–23 (MNSSSLLTPSSSPSPHLQSPATF) and 95–143 (FHLP…PHSI). The interval 136–149 (QATDPHSIAERLRR) is basic motif; degenerate. Residues 136–185 (QATDPHSIAERLRRERIAERMKSLQELVPNGNKTDKASMLDEIIDYVKFL) form the bHLH domain. Residues 150-185 (ERIAERMKSLQELVPNGNKTDKASMLDEIIDYVKFL) form a helix-loop-helix motif region. The disordered stretch occupies residues 203–225 (ASSQISEDAGGSHENTSSSGEAK).

Homodimer. As to expression, expressed constitutively in roots, leaves, stems, and flowers.

The protein resides in the nucleus. Its function is as follows. Transcription factor that regulates the development of root hairs. Transcription factor that regulates the development of sperm cells. The protein is Transcription factor LRL2 of Arabidopsis thaliana (Mouse-ear cress).